The following is a 310-amino-acid chain: tRNA uridine(34) hydroxylase (310 aa).

The Rhodanese domain maps to 124–218 (SDPEVLLIDT…YFEEVAQEES (95 aa)). Cys178 serves as the catalytic Cysteine persulfide intermediate.

It belongs to the TrhO family.

The enzyme catalyses uridine(34) in tRNA + AH2 + O2 = 5-hydroxyuridine(34) in tRNA + A + H2O. Its function is as follows. Catalyzes oxygen-dependent 5-hydroxyuridine (ho5U) modification at position 34 in tRNAs. The chain is tRNA uridine(34) hydroxylase from Pseudomonas entomophila (strain L48).